Consider the following 138-residue polypeptide: Basic phospholipase A2 myotoxin I (138 aa).

A signal peptide spans 1-16 (MRTLWIMAVLLVGVEG). 7 cysteine pairs are disulfide-bonded: Cys-42–Cys-131, Cys-44–Cys-60, Cys-59–Cys-111, Cys-65–Cys-138, Cys-66–Cys-104, Cys-73–Cys-97, and Cys-91–Cys-102. Ca(2+) is bound by residues Tyr-43, Gly-45, and Gly-47. His-63 is a catalytic residue. Asp-64 lines the Ca(2+) pocket. Asp-105 is an active-site residue.

Belongs to the phospholipase A2 family. Group II subfamily. D49 sub-subfamily. Monomer. Homodimer; non-covalently linked (alternative/compact dimer conformation). Requires Ca(2+) as cofactor. Expressed by the venom gland.

It localises to the secreted. The enzyme catalyses a 1,2-diacyl-sn-glycero-3-phosphocholine + H2O = a 1-acyl-sn-glycero-3-phosphocholine + a fatty acid + H(+). High level of membrane cholesterol content reduces cytolytic activity, whereas low level of membrane cholesterol content increases cytolytic activity. Snake venom phospholipase A2 (PLA2) that displays local myotoxic activity. It also displays anticoagulant action in plasma and edema-inducing activities. In addition, it shows cytotoxic activity to a variety of cell types and bactericidal activity to a variety of Gram-negative and Gram-positive bacteria. PLA2 catalyzes the calcium-dependent hydrolysis of the 2-acyl groups in 3-sn-phosphoglycerides. The protein is Basic phospholipase A2 myotoxin I of Bothrops asper (Terciopelo).